Here is a 517-residue protein sequence, read N- to C-terminus: Tyrosine 3-monooxygenase (517 aa).

The residue at position 33 (serine 33) is a Phosphoserine; by PKA. Fe cation is bound by residues histidine 345, histidine 350, and glutamate 390.

This sequence belongs to the biopterin-dependent aromatic amino acid hydroxylase family. It depends on Fe(2+) as a cofactor.

It localises to the cytoplasm. Its subcellular location is the perinuclear region. The protein resides in the cell projection. The protein localises to the axon. The enzyme catalyses (6R)-L-erythro-5,6,7,8-tetrahydrobiopterin + L-tyrosine + O2 = (4aS,6R)-4a-hydroxy-L-erythro-5,6,7,8-tetrahydrobiopterin + L-dopa. It functions in the pathway catecholamine biosynthesis; dopamine biosynthesis; dopamine from L-tyrosine: step 1/2. Its activity is regulated as follows. Phosphorylation leads to an increase in the catalytic activity. Involved in the synthesis of catecholamines, such as dopamine. Has a role in serotonin signaling. Required for normal explorative and foraging behavior. The protein is Tyrosine 3-monooxygenase (cat-2) of Caenorhabditis briggsae.